A 115-amino-acid chain; its full sequence is Holo-[acyl-carrier-protein] synthase (115 aa).

Mg(2+) contacts are provided by aspartate 8 and glutamate 50.

Belongs to the P-Pant transferase superfamily. AcpS family. Mg(2+) is required as a cofactor.

The protein localises to the cytoplasm. It carries out the reaction apo-[ACP] + CoA = holo-[ACP] + adenosine 3',5'-bisphosphate + H(+). In terms of biological role, transfers the 4'-phosphopantetheine moiety from coenzyme A to a Ser of acyl-carrier-protein. The chain is Holo-[acyl-carrier-protein] synthase from Cutibacterium acnes (strain DSM 16379 / KPA171202) (Propionibacterium acnes).